Consider the following 273-residue polypeptide: Large ribosomal subunit protein uL2 (273 aa).

A disordered region spans residues valine 228–lysine 273. Basic residues predominate over residues lysine 254–lysine 273.

The protein belongs to the universal ribosomal protein uL2 family. In terms of assembly, part of the 50S ribosomal subunit. Forms a bridge to the 30S subunit in the 70S ribosome.

Functionally, one of the primary rRNA binding proteins. Required for association of the 30S and 50S subunits to form the 70S ribosome, for tRNA binding and peptide bond formation. It has been suggested to have peptidyltransferase activity; this is somewhat controversial. Makes several contacts with the 16S rRNA in the 70S ribosome. The polypeptide is Large ribosomal subunit protein uL2 (Rickettsia akari (strain Hartford)).